A 491-amino-acid chain; its full sequence is Sodium-dependent glucose transporter 1 (491 aa).

The next 11 helical transmembrane spans lie at 26–46 (FIFV…GILF), 52–72 (HLLL…VPWC), 81–101 (VMSV…IIIL), 119–139 (FALG…FLPL), 165–185 (LSYI…FILF), 210–230 (AVIF…VAYG), 255–275 (LFWG…TCLY), 277–297 (GTML…LVLF), 303–323 (LLWV…PSGF), 338–358 (SLFV…VGYL), and 365–385 (FPVL…LFPV). 2 disordered regions span residues 397–425 (AQYN…DEAQ) and 438–491 (NDQM…EKND). A compositionally biased stretch (acidic residues) spans 416–425 (MEEEDEDEAQ). Over residues 440 to 458 (QMKNSVTVISEDTPGNSAP) the composition is skewed to polar residues.

The protein belongs to the major facilitator superfamily.

The protein localises to the apical cell membrane. Functionally, may function as a sodium-dependent glucose transporter. Potential channels for urea in the inner medulla of kidney. The polypeptide is Sodium-dependent glucose transporter 1 (mfsd4b) (Xenopus laevis (African clawed frog)).